Consider the following 151-residue polypeptide: Putative pre-16S rRNA nuclease (151 aa).

It belongs to the YqgF nuclease family.

Its subcellular location is the cytoplasm. Could be a nuclease involved in processing of the 5'-end of pre-16S rRNA. This is Putative pre-16S rRNA nuclease from Pelagibacter ubique (strain HTCC1062).